The sequence spans 359 residues: Chorismate synthase (359 aa).

2 residues coordinate NADP(+): Arg48 and Arg54. FMN is bound by residues 125 to 127 (RSS), 243 to 244 (NA), Gly283, 298 to 302 (KPTSS), and Arg324.

It belongs to the chorismate synthase family. In terms of assembly, homotetramer. FMNH2 serves as cofactor.

The catalysed reaction is 5-O-(1-carboxyvinyl)-3-phosphoshikimate = chorismate + phosphate. Its pathway is metabolic intermediate biosynthesis; chorismate biosynthesis; chorismate from D-erythrose 4-phosphate and phosphoenolpyruvate: step 7/7. Functionally, catalyzes the anti-1,4-elimination of the C-3 phosphate and the C-6 proR hydrogen from 5-enolpyruvylshikimate-3-phosphate (EPSP) to yield chorismate, which is the branch point compound that serves as the starting substrate for the three terminal pathways of aromatic amino acid biosynthesis. This reaction introduces a second double bond into the aromatic ring system. This is Chorismate synthase from Mannheimia succiniciproducens (strain KCTC 0769BP / MBEL55E).